The chain runs to 128 residues: Large ribosomal subunit protein bL17 (128 aa).

Belongs to the bacterial ribosomal protein bL17 family. Part of the 50S ribosomal subunit. Contacts protein L32.

The polypeptide is Large ribosomal subunit protein bL17 (Proteus mirabilis (strain HI4320)).